Consider the following 123-residue polypeptide: Late histone H2B.L1 (123 aa).

Over residues 1 to 10 (MPAKAQPAGK) the composition is skewed to low complexity. The interval 1-33 (MPAKAQPAGKKGSKKAKAPRPSGGKKRRRRRKE) is disordered. The span at 11–32 (KGSKKAKAPRPSGGKKRRRRRK) shows a compositional bias: basic residues. Ser-110 carries an O-linked (GlcNAc) serine glycan. A Glycyl lysine isopeptide (Lys-Gly) (interchain with G-Cter in ubiquitin) cross-link involves residue Lys-118.

It belongs to the histone H2B family. As to quaternary structure, the nucleosome is a histone octamer containing two molecules each of H2A, H2B, H3 and H4 assembled in one H3-H4 heterotetramer and two H2A-H2B heterodimers. The octamer wraps approximately 147 bp of DNA. Post-translationally, monoubiquitination of Lys-118 gives a specific tag for epigenetic transcriptional activation and is also prerequisite for histone H3 'Lys-4' and 'Lys-79' methylation. In terms of processing, glcNAcylation at Ser-110 promotes monoubiquitination of Lys-118. It fluctuates in response to extracellular glucose, and associates with transcribed genes.

The protein localises to the nucleus. The protein resides in the chromosome. Core component of nucleosome. Nucleosomes wrap and compact DNA into chromatin, limiting DNA accessibility to the cellular machineries which require DNA as a template. Histones thereby play a central role in transcription regulation, DNA repair, DNA replication and chromosomal stability. DNA accessibility is regulated via a complex set of post-translational modifications of histones, also called histone code, and nucleosome remodeling. In Strongylocentrotus purpuratus (Purple sea urchin), this protein is Late histone H2B.L1.